A 432-amino-acid chain; its full sequence is Probable exopolygalacturonase C (432 aa).

Residues 1–20 form the signal peptide; sequence MPISKGIFLSLLSTLPLALA. Residues N33, N73, N90, and N140 are each glycosylated (N-linked (GlcNAc...) asparagine). 2 PbH1 repeats span residues 206-227 and 229-250; these read GTNI…AVGS and SHDI…SIGS. Catalysis depends on D220, which acts as the Proton donor. H244 is a catalytic residue. N260 is a glycosylation site (N-linked (GlcNAc...) asparagine). The stretch at 261-282 is one PbH1 3 repeat; the sequence is ITNLRFEDVTVIDALYAARFKS. N292 and N302 each carry an N-linked (GlcNAc...) asparagine glycan. C377 and C383 are joined by a disulfide. The N-linked (GlcNAc...) asparagine glycan is linked to N407.

This sequence belongs to the glycosyl hydrolase 28 family.

The protein localises to the secreted. The catalysed reaction is [(1-&gt;4)-alpha-D-galacturonosyl](n) + H2O = alpha-D-galacturonate + [(1-&gt;4)-alpha-D-galacturonosyl](n-1). Functionally, specific in hydrolyzing the terminal glycosidic bond of polygalacturonic acid and oligogalacturonates. This is Probable exopolygalacturonase C (pgxC) from Aspergillus terreus (strain NIH 2624 / FGSC A1156).